A 76-amino-acid chain; its full sequence is Protein RALF-like 26 (76 aa).

The signal sequence occupies residues 1–22 (MKAWMIILLVICVAVVVEQSEA). Residues C37 and C46 are joined by a disulfide bond. N-linked (GlcNAc...) asparagine glycosylation occurs at N61. C66 and C72 form a disulfide bridge.

This sequence belongs to the plant rapid alkalinization factor (RALF) family.

The protein resides in the secreted. Cell signaling peptide that may regulate plant stress, growth, and development. Mediates a rapid alkalinization of extracellular space by mediating a transient increase in the cytoplasmic Ca(2+) concentration leading to a calcium-dependent signaling events through a cell surface receptor and a concomitant activation of some intracellular mitogen-activated protein kinases. This is Protein RALF-like 26 (RALFL26) from Arabidopsis thaliana (Mouse-ear cress).